Here is a 368-residue protein sequence, read N- to C-terminus: uncharacterized protein (368 aa).

It belongs to the ornithine cyclodeaminase/mu-crystallin family.

This is an uncharacterized protein from Dictyostelium discoideum (Social amoeba).